Consider the following 360-residue polypeptide: Phospho-N-acetylmuramoyl-pentapeptide-transferase (360 aa).

Helical transmembrane passes span 21–41 (YLTLRVILGTLTALMLCLWLG), 73–93 (TMGGAMILIAIAVSTLLWGDL), 94–114 (TNHYVWLVLAVTLGFGAIGWV), 145–165 (AVTLYLTAASPVEVSLIVPLF), 168–188 (VVVPLGLFYIVLTYFVIVGSS), 199–219 (GLAIMPTVLVAMGLAIFAYAS), 236–256 (AGELAVFCGTIAGAGLGFLWF), 263–283 (VFMGDVGALALGAALGVVAVI), 288–308 (IVLFIMGGVFVMETVSVMLQV), and 339–359 (IVRFWIITVVLVLLGLATLKI).

Belongs to the glycosyltransferase 4 family. MraY subfamily. Mg(2+) serves as cofactor.

It is found in the cell inner membrane. The catalysed reaction is UDP-N-acetyl-alpha-D-muramoyl-L-alanyl-gamma-D-glutamyl-meso-2,6-diaminopimeloyl-D-alanyl-D-alanine + di-trans,octa-cis-undecaprenyl phosphate = di-trans,octa-cis-undecaprenyl diphospho-N-acetyl-alpha-D-muramoyl-L-alanyl-D-glutamyl-meso-2,6-diaminopimeloyl-D-alanyl-D-alanine + UMP. It participates in cell wall biogenesis; peptidoglycan biosynthesis. Functionally, catalyzes the initial step of the lipid cycle reactions in the biosynthesis of the cell wall peptidoglycan: transfers peptidoglycan precursor phospho-MurNAc-pentapeptide from UDP-MurNAc-pentapeptide onto the lipid carrier undecaprenyl phosphate, yielding undecaprenyl-pyrophosphoryl-MurNAc-pentapeptide, known as lipid I. This chain is Phospho-N-acetylmuramoyl-pentapeptide-transferase, found in Chromohalobacter salexigens (strain ATCC BAA-138 / DSM 3043 / CIP 106854 / NCIMB 13768 / 1H11).